Reading from the N-terminus, the 336-residue chain is Transmembrane protein 120A (336 aa).

At 1-131 the chain is on the cytoplasmic side; it reads MNSPALQDCV…KQSKFAYKDE (131 aa). CoA is bound at residue Lys-129. Residues 132 to 151 traverse the membrane as a helical segment; that stretch reads YEKFKLYLTMILMVLSFICR. Residues 152–157 lie on the Extracellular side of the membrane; that stretch reads FVLNSR. The helical transmembrane segment at 158-176 threads the bilayer; it reads VTDAVFNFLLVWYYCTLTI. The Cytoplasmic segment spans residues 177 to 189; that stretch reads RESILINNGSRIK. CoA-binding residues include Ser-186 and Arg-187. Residues 190–208 traverse the membrane as a helical segment; the sequence is GWWVLNHYISTFLSGVMLT. Over 209 to 217 the chain is Extracellular; the sequence is WPDGLMYQM. Residues 218-239 form a helical membrane-spanning segment; that stretch reads FRNQFLSFSMYQSFVQFLQYYY. CoA is bound by residues Gln-236, Tyr-239, and Gln-240. The Cytoplasmic portion of the chain corresponds to 240–269; it reads QSGCLYRLRALGERHNMDLTVEGFQSWMWR. Residues 270 to 293 traverse the membrane as a helical segment; sequence GLTFLLPFLFFGQFWQLYNAITLF. The Extracellular portion of the chain corresponds to 294-303; the sequence is KLARHPECKE. The chain crosses the membrane as a helical span at residues 304-329; the sequence is WQVIMCGLPFLVHFLGNFFTTLRVVH. Topologically, residues 330–336 are cytoplasmic; sequence QKFQKQN. Residue Lys-331 coordinates CoA.

It belongs to the TMEM120 family. Homodimer.

It localises to the cell membrane. The protein resides in the nucleus inner membrane. Its subcellular location is the endoplasmic reticulum. Multifunctional protein involved in mechanosensation, and plays an essential role in lipid metabolism. May function as a potential ion channel involved in sensing mechanical stimuli. TMEM120A is structurally similar to a lipid-modifying enzyme, ELOVL7, and contains a bound coenzyme A molecule, which suggests it might function as an enzyme in lipid metabolism. This Xenopus tropicalis (Western clawed frog) protein is Transmembrane protein 120A.